The sequence spans 302 residues: D-alanine--D-alanine ligase (302 aa).

In terms of domain architecture, ATP-grasp spans 100-295 (KTVFDHHGIL…FNELIAKLIE (196 aa)). Position 126–180 (126–180 (QDLEPPVFIKPNSGGSSLGMTFARTAEELEKGIETVFSLGDSALVEEYTKGIEVT)) interacts with ATP. The Mg(2+) site is built by Asp250, Glu262, and Asn264.

It belongs to the D-alanine--D-alanine ligase family. It depends on Mg(2+) as a cofactor. The cofactor is Mn(2+).

The protein localises to the cytoplasm. It catalyses the reaction 2 D-alanine + ATP = D-alanyl-D-alanine + ADP + phosphate + H(+). Its pathway is cell wall biogenesis; peptidoglycan biosynthesis. Cell wall formation. The sequence is that of D-alanine--D-alanine ligase from Maridesulfovibrio salexigens (strain ATCC 14822 / DSM 2638 / NCIMB 8403 / VKM B-1763) (Desulfovibrio salexigens).